Here is a 183-residue protein sequence, read N- to C-terminus: Transcription factor E (183 aa).

The 94-residue stretch at 4-97 (YIELVRRYVY…SWSIKDEDIR (94 aa)) folds into the HTH TFE/IIEalpha-type domain.

It belongs to the TFE family. As to quaternary structure, monomer. Interaction with RNA polymerase subunits RpoF and RpoE is necessary for Tfe stimulatory transcription activity. Able to interact with Tbp and RNA polymerase in the absence of DNA promoter. Interacts both with the preinitiation and elongation complexes.

Its function is as follows. Transcription factor that plays a role in the activation of archaeal genes transcribed by RNA polymerase. Facilitates transcription initiation by enhancing TATA-box recognition by TATA-box-binding protein (Tbp), and transcription factor B (Tfb) and RNA polymerase recruitment. Not absolutely required for transcription in vitro, but particularly important in cases where Tbp or Tfb function is not optimal. It dynamically alters the nucleic acid-binding properties of RNA polymerases by stabilizing the initiation complex and destabilizing elongation complexes. Seems to translocate with the RNA polymerase following initiation and acts by binding to the non template strand of the transcription bubble in elongation complexes. The chain is Transcription factor E from Caldivirga maquilingensis (strain ATCC 700844 / DSM 13496 / JCM 10307 / IC-167).